The sequence spans 102 residues: Small ribosomal subunit protein uS10 (102 aa).

It belongs to the universal ribosomal protein uS10 family. Part of the 30S ribosomal subunit.

Functionally, involved in the binding of tRNA to the ribosomes. This Exiguobacterium sp. (strain ATCC BAA-1283 / AT1b) protein is Small ribosomal subunit protein uS10.